The sequence spans 449 residues: Hyaluronidase-1 (449 aa).

The first 23 residues, 1–23, serve as a signal peptide directing secretion; that stretch reads MYHIWIKFLAAWIFLKRFNGVHV. 2 cysteine pairs are disulfide-bonded: C47-C340 and C211-C227. N67, N103, and N111 each carry an N-linked (GlcNAc...) asparagine glycan. E135 functions as the Proton donor in the catalytic mechanism. A glycan (N-linked (GlcNAc...) asparagine) is linked at N153. N-linked (GlcNAc...) asparagine glycosylation occurs at N357. 3 disulfides stabilise this stretch: C365-C376, C370-C427, and C429-C438. N-linked (GlcNAc...) asparagine glycosylation is present at N401. Positions 427–438 constitute an EGF-like domain; that stretch reads CQCYQGWKGLYC.

It belongs to the glycosyl hydrolase 56 family. In terms of assembly, monomer. As to expression, expressed by the venom gland.

The protein resides in the secreted. It carries out the reaction Random hydrolysis of (1-&gt;4)-linkages between N-acetyl-beta-D-glucosamine and D-glucuronate residues in hyaluronate.. Snake venom endo-hyaluronidase that degrades hyaluronan to smaller oligosaccharide fragments. In venom, it is not toxic by itself, but increases the diffusion of other venom proteins by degrading the extracellular matrix. In addition, it displays antiedematogenic activity. The sequence is that of Hyaluronidase-1 from Cerastes cerastes (Horned desert viper).